The chain runs to 245 residues: tRNA (guanine-N(1)-)-methyltransferase (245 aa).

Residues glycine 111 and 131-136 (MGDYVL) contribute to the S-adenosyl-L-methionine site.

This sequence belongs to the RNA methyltransferase TrmD family. As to quaternary structure, homodimer.

It is found in the cytoplasm. The enzyme catalyses guanosine(37) in tRNA + S-adenosyl-L-methionine = N(1)-methylguanosine(37) in tRNA + S-adenosyl-L-homocysteine + H(+). Its function is as follows. Specifically methylates guanosine-37 in various tRNAs. The chain is tRNA (guanine-N(1)-)-methyltransferase from Staphylococcus epidermidis (strain ATCC 35984 / DSM 28319 / BCRC 17069 / CCUG 31568 / BM 3577 / RP62A).